Consider the following 1696-residue polypeptide: PH domain leucine-rich repeat protein phosphatase 1 (1696 aa).

The residue at position 1 (Met1) is an N-acetylmethionine. Disordered regions lie at residues 1–97 and 222–398; these read MEPA…GGGA and LGHG…VVGE. A compositionally biased stretch (low complexity) spans 79–92; sequence VPQPAAGGAAPVTA. A compositionally biased stretch (polar residues) spans 313–325; sequence DTESFSLSPSAES. A Phosphoserine modification is found at Ser378. Residues 499 to 599 form the PH domain; that stretch reads RIQLSGMYNV…WLRQVSKVAS (101 aa). 18 LRR repeats span residues 601-622, 624-645, 655-676, 678-699, 701-722, 724-746, 836-857, 858-879, 881-902, 904-925, 926-947, 950-971, 976-996, 1000-1021, 1024-1045, 1047-1068, 1069-1090, and 1092-1113; these read RISSVDLSCCSLEHLPANLFYS, DLTHLNLKQNFLRQNPSLPAAR, KLKSLNLSNNHLGAFPSAVCSI, TLAELNVSCNALQEVPAAVGAM, NLQTFLLDGNFLQSLPAELENM, QLSYLGLSFNEFTDIPEVLEKLT, FLKALYASSNELVQLDVYPVPN, YLSYMDVSRNCLESVPEWVCES, KLEVLDIGHNQICELPARLFCN, SLRKLLAGHNRLARLPERLERT, SVEVLDVQHNQIIELPPNLLMK, SLRFLNASANKLETLPPATLSE, ILQELYLTNNSLTDKCVPLLT, RLKILHMAYNRLQSFPASKMAK, ELEEIDISGNKLKAIPTTIMNC, RMHTVIAHSNCIEVFPEVMQLP, EVKCVDLSCNELSEITLPENLP, and KLQELDLTGNPRLALDHKSLEL. The 248-residue stretch at 1138–1385 folds into the PPM-type phosphatase domain; the sequence is SHGYTEASGV…DSISAVVVQL (248 aa). Mn(2+) is bound by residues Asp1173, Gly1174, Lys1337, and Asp1376. 2 disordered regions span residues 1422–1473 and 1610–1696; these read RPSD…SPAY and KPGG…DTPL. Composition is skewed to low complexity over residues 1431 to 1452, 1647 to 1660, and 1670 to 1680; these read SSSSGMASEISSELSTSEMSSE, QQQQQQQQQQQQQQ, and QAQAQAQAQAQ. Positions 1694–1696 match the PDZ-binding motif; that stretch reads TPL.

Interacts with the nucleotide free form of K-Ras (KRAS) via its LRR repeats. Interacts with AKT2, AKT3 and PRKCB isoform beta-II. Interacts with WDR48 and USP12. Mn(2+) serves as cofactor. As to expression, mainly present in brain (at protein level). Isoform 2 is more abundant in adult brain neurons than isoform 1 in. Isoforms 1 and 2 are expressed in the retina but not found in rod outer segments.

It localises to the cytoplasm. Its subcellular location is the membrane. It is found in the cell membrane. The protein localises to the nucleus. The protein resides in the nucleoplasm. It localises to the nucleus membrane. The enzyme catalyses O-phospho-L-seryl-[protein] + H2O = L-seryl-[protein] + phosphate. It carries out the reaction O-phospho-L-threonyl-[protein] + H2O = L-threonyl-[protein] + phosphate. Insensitive to okadaic acid. Deubiquitination by WDR48-USP12 complex positively regulates PHLPP1 stability. In terms of biological role, protein phosphatase involved in regulation of Akt and PKC signaling. Mediates dephosphorylation in the C-terminal domain hydrophobic motif of members of the AGC Ser/Thr protein kinase family; specifically acts on 'Ser-473' of AKT2 and AKT3, 'Ser-660' of PRKCB and 'Ser-657' of PRKCA. Isoform 2 seems to have a major role in regulating Akt signaling in hippocampal neurons while isoform 1 may promote Akt and PKC activation and inhibit ERK signaling. Akt regulates the balance between cell survival and apoptosis through a cascade that primarily alters the function of transcription factors that regulate pro- and antiapoptotic genes. Dephosphorylation of 'Ser-473' of Akt triggers apoptosis and suppression of tumor growth. Dephosphorylation of PRKCA and PRKCB leads to their destabilization and degradation. Dephosphorylates STK4 on 'Thr-387' leading to STK4 activation and apoptosis. Dephosphorylates RPS6KB1 and is involved in regulation of cap-dependent translation. Inhibits cancer cell proliferation and may act as a tumor suppressor. Dephosphorylates RAF1 inhibiting its kinase activity. May act as a negative regulator of K-Ras signaling in membrane rafts. Involved in the hippocampus-dependent long-term memory formation. Involved in circadian control by regulating the consolidation of circadian periodicity after resetting. Involved in development and function of regulatory T-cells. The chain is PH domain leucine-rich repeat protein phosphatase 1 (Phlpp1) from Rattus norvegicus (Rat).